The primary structure comprises 677 residues: Methionine--tRNA ligase (677 aa).

The 'HIGH' region signature appears at 15–25 (PYANGSIHLGH). Zn(2+) is bound by residues cysteine 146, cysteine 149, cysteine 159, and cysteine 162. Positions 333–337 (KMSKS) match the 'KMSKS' region motif. Lysine 336 provides a ligand contact to ATP. The tRNA-binding domain maps to 575–677 (DFAKVDLRVA…DGAKPGQQVK (103 aa)).

Belongs to the class-I aminoacyl-tRNA synthetase family. MetG type 1 subfamily. In terms of assembly, homodimer. Requires Zn(2+) as cofactor.

It localises to the cytoplasm. It carries out the reaction tRNA(Met) + L-methionine + ATP = L-methionyl-tRNA(Met) + AMP + diphosphate. Its function is as follows. Is required not only for elongation of protein synthesis but also for the initiation of all mRNA translation through initiator tRNA(fMet) aminoacylation. The sequence is that of Methionine--tRNA ligase from Klebsiella pneumoniae (strain 342).